The primary structure comprises 367 residues: MSVNRILVINPGSTSTKIGVFDNERPVLEETIRHDEEQIGKYKRIIDQYEFRKETILEVLHSHGINISKLNAVCGRGGLLRPIEGGTYTVNDAMLEDLKNGFSGHHASNLGGILAYEIASGLNIPAFIVDPVVVDEMEPIARISGIAGMERKSIFHALNQKAVARKVAEQLNHKYEDLNLLVTHMGGGITVGAHKKGRVIDVNNGLNGEGPFSPERAGTVPVGQLVEMCFSGEYYRDEMIKKLVGQGGLVSLIGTNDAIKVEQMVEKGDPEATLIYKAMAYQVAKEIGGASAVLHGKIDAIVLTGGLAYSKILVDEIKERVDWIADVIVHPGEDELQALAEGALRVLREEEAPKEYIVREKETVARG.

The protein belongs to the acetokinase family.

It localises to the cytoplasm. The enzyme catalyses butanoate + ATP = butanoyl phosphate + ADP. The protein is Probable butyrate kinase of Bacillus cereus (strain Q1).